The chain runs to 252 residues: Protein UL24 homolog (252 aa).

Residues 215-252 form a disordered region; sequence SVLTKTSGENRSRASRQVAKNAPKNRIRRTAKKDAKRQ. Residues 237 to 252 are compositionally biased toward basic residues; that stretch reads PKNRIRRTAKKDAKRQ.

This sequence belongs to the herpesviridae UL24 family.

It localises to the virion. The protein resides in the host cytoplasm. The protein localises to the host nucleus. Its subcellular location is the host nucleolus. It is found in the host Golgi apparatus. May participate in nuclear egress of viral particles. Plays a role in the dispersal of several host nucleolar proteins including NCL/nucleolin and NPM1. Since deletion of host NCL/nucleolin negatively impact on nuclear egress, UL24 supposedly acts on this process through its effect on host nucleoli. The sequence is that of Protein UL24 homolog (U49) from Homo sapiens (Human).